The primary structure comprises 319 residues: Olfactory receptor 8U8 (319 aa).

At 1–28 (MAHINCTQATEFILVGLTDHQELKMPLF) the chain is on the extracellular side. Residue N5 is glycosylated (N-linked (GlcNAc...) asparagine). Residues 29 to 49 (VLFLSIYLFTVVGNLGLILLI) traverse the membrane as a helical segment. Topologically, residues 50-56 (RADTSLN) are cytoplasmic. Residues 57 to 77 (TPMYFFLSNLAFVDFCYSSVI) traverse the membrane as a helical segment. At 78–97 (TPKMLGNFLYKQNVISFDAC) the chain is on the extracellular side. A disulfide bridge links C97 with C179. A helical transmembrane segment spans residues 98 to 118 (ATQLGCFLTFMVSESLLLASM). The Cytoplasmic segment spans residues 119–122 (AYDR). Residues 123 to 143 (YVAICNPLLYMVVMTPGICIQ) traverse the membrane as a helical segment. The Extracellular portion of the chain corresponds to 144 to 204 (LVAVPYSYSF…KQLWILACAG (61 aa)). Residues 205–225 (ITFICSVLIVFVSYMFIIFAI) traverse the membrane as a helical segment. Residues 226-239 (LRMSSAEGRRKAFS) are Cytoplasmic-facing. Residues 240-260 (TCSSHMLAVTIFYGTLIFMYL) form a helical membrane-spanning segment. Residues 261 to 271 (QPSSSHSLDAD) are Extracellular-facing. A helical membrane pass occupies residues 272 to 292 (KMASVFYTVIIPMLNPLIYSL). Topologically, residues 293-319 (RNKDVKDALKKVIINRNHAFIFLKLRK) are cytoplasmic.

The protein belongs to the G-protein coupled receptor 1 family.

The protein localises to the cell membrane. Functionally, odorant receptor. This chain is Olfactory receptor 8U8 (OR8U8), found in Homo sapiens (Human).